The chain runs to 436 residues: GTPase Der (436 aa).

EngA-type G domains are found at residues 4–167 (PIVA…KEEE) and 176–351 (IRLS…ENHK). Residues 10-17 (GRPNVGKS), 57-61 (DTGGI), 119-122 (NKVD), 182-189 (GRPNVGKS), 229-233 (DTAGM), and 294-297 (NKWD) contribute to the GTP site. Residues 352–436 (KRVQSSTLNE…PVHIIARKRN (85 aa)) form the KH-like domain.

It belongs to the TRAFAC class TrmE-Era-EngA-EngB-Septin-like GTPase superfamily. EngA (Der) GTPase family. Associates with the 50S ribosomal subunit.

Its function is as follows. GTPase that plays an essential role in the late steps of ribosome biogenesis. This Staphylococcus saprophyticus subsp. saprophyticus (strain ATCC 15305 / DSM 20229 / NCIMB 8711 / NCTC 7292 / S-41) protein is GTPase Der.